The chain runs to 182 residues: Ribosome-recycling factor (182 aa).

The protein belongs to the RRF family.

The protein resides in the cytoplasm. In terms of biological role, responsible for the release of ribosomes from messenger RNA at the termination of protein biosynthesis. May increase the efficiency of translation by recycling ribosomes from one round of translation to another. The polypeptide is Ribosome-recycling factor (Mycoplasma capricolum subsp. capricolum (strain California kid / ATCC 27343 / NCTC 10154)).